Here is a 363-residue protein sequence, read N- to C-terminus: Cell division cycle-associated protein 3 (363 aa).

A compositionally biased stretch (polar residues) spans 1 to 12 (MGSAESKAQVTP). Disordered regions lie at residues 1–81 (MGSA…TPLR), 126–152 (VESQ…KAET), 191–210 (MNDQ…EESP), and 231–363 (ENLN…HSNS). Residues 93–152 (KQLSEVFVAEDSSTEGGPLGFTGPEATNLERQVVESQTAPPAGEHVNDHEVEPSVEKAET) form an F-box-like region. Basic and acidic residues predominate over residues 137 to 152 (HVNDHEVEPSVEKAET). Residues 192 to 210 (NDQEESPIAETMNDQEESP) are compositionally biased toward acidic residues. Residues 259–285 (SVVSTESTQATGQQQKTRGKSPRSSGV) show a composition bias toward polar residues. The span at 296 to 308 (LLSSSSGRSPLRI) shows a compositional bias: low complexity. Residues 311 to 321 (EDNSPNTNTQH) show a composition bias toward polar residues. Residues 353–355 (KEN) carry the KEN box motif.

Interacts with wee1, when wee1 is phosphorylated at 'Ser-38'. In terms of processing, phosphorylated. Ubiquitinated and degraded by the APC/C-Cdh1 complex during G1 phase.

It localises to the cytoplasm. The protein localises to the cytosol. It participates in protein modification; protein ubiquitination. Its function is as follows. F-box-like protein which is required for entry into mitosis. Acts by participating in E3 ligase complexes that mediate the ubiquitination and degradation of WEE1 kinase at G2/M phase. The protein is Cell division cycle-associated protein 3 (cdca3) of Xenopus laevis (African clawed frog).